Consider the following 735-residue polypeptide: Dolichyl-diphosphooligosaccharide--protein glycosyltransferase subunit STT3B (735 aa).

The Cytoplasmic segment spans residues 1–38 (MGGKSEPAKSESMATKPDLLNTSFFSFKSLKLKTKQQE). A helical membrane pass occupies residues 39-59 (LLLRISILGLVYILAFIARLF). Over 60–142 (SVLRYESMIH…VHIREVCVLT (83 aa)) the chain is Lumenal. The DXD motif 1 signature appears at 70–72 (EFD). Mn(2+) is bound at residue D72. Residues 143 to 161 (APFFASNTTLVAYFFGKEL) form a helical membrane-spanning segment. The Cytoplasmic portion of the chain corresponds to 162-163 (WD). A helical transmembrane segment spans residues 164-181 (TGAGLVAAVLIAICPGYI). At 182–192 (SRSVAGSYDNE) the chain is on the lumenal side. Residues D190 and E192 each coordinate Mn(2+). The short motif at 190–192 (DNE) is the DXD motif 2 element. The chain crosses the membrane as a helical span at residues 193–212 (AVAIFALLLTFYLFVKAVNT). Topologically, residues 213 to 214 (GS) are cytoplasmic. A helical transmembrane segment spans residues 215-229 (LAWALASAFGYFYMV). Over 230 to 234 (SAWGG) the chain is Lumenal. Residues 235 to 251 (YVFIINLVPLYVLVLLI) traverse the membrane as a helical segment. The Cytoplasmic portion of the chain corresponds to 252-256 (TGRYS). Residues 257–282 (MRLYIAYNCMYILGMLLAMQIRFVGF) form a helical membrane-spanning segment. Topologically, residues 283 to 290 (QHVQSGEH) are lumenal. A helical transmembrane segment spans residues 291 to 310 (MGAMGVFLLMQVFYFLDWVK). Topologically, residues 311–326 (YQLNDTKLFQTFLRIT) are cytoplasmic. The helical transmembrane segment at 327 to 347 (VTSAILVGGVAVGVGTASGYI) threads the bilayer. Residues 348 to 380 (SPWTGRFYSLLDPTYAKDHIPIIASVSEHQPTA) lie on the Lumenal side of the membrane. An SVSE motif motif is present at residues 372 to 375 (SVSE). Residues 381-403 (WSSFMFDYHILLFLFPAGLYFCF) traverse the membrane as a helical segment. Topologically, residues 404–409 (KRLTDA) are cytoplasmic. The chain crosses the membrane as a helical span at residues 410-426 (TIFIVMYGLTSLYFAGV). The Lumenal portion of the chain corresponds to 427 to 430 (MVRL). R429 contacts dolichyl diphosphooligosaccharide. A helical membrane pass occupies residues 431–452 (ILVATPAVCLISAIAVSATIKN). Residues 453–494 (LTSLLRTKQKVSQTGSTKGAGSSKASSKVTLDQSQPFQKNGA) are Cytoplasmic-facing. A helical membrane pass occupies residues 495-515 (IALLVGVFYLLSRYAIHCTWV). At 516-735 (TAEAYSSPSI…YRVKPPTNRL (220 aa)) the chain is on the lumenal side. The tract at residues 562 to 564 (WWD) is interacts with target acceptor peptide in protein substrate. The WWDYG motif motif lies at 562 to 566 (WWDYG). A dolichyl diphosphooligosaccharide-binding site is contributed by Y567. N-linked (GlcNAc...) asparagine glycosylation is found at N574 and N581. A glycan (N-linked (GlcNAc...) (high mannose) asparagine) is linked at N585. The DK motif signature appears at 629-636 (DINKFLWM).

It belongs to the STT3 family. As to quaternary structure, component of the oligosaccharyltransferase (OST) complex. It depends on Mg(2+) as a cofactor. Mn(2+) is required as a cofactor. Expressed preferentially in the root but also in the shoot.

It is found in the endoplasmic reticulum membrane. The catalysed reaction is a di-trans,poly-cis-dolichyl diphosphooligosaccharide + L-asparaginyl-[protein] = N(4)-(oligosaccharide-(1-&gt;4)-N-acetyl-beta-D-glucosaminyl-(1-&gt;4)-N-acetyl-beta-D-glucosaminyl)-L-asparaginyl-[protein] + a di-trans,poly-cis-dolichyl diphosphate + H(+). Its pathway is protein modification; protein glycosylation. In terms of biological role, catalytic subunit of the oligosaccharyl transferase (OST) complex that catalyzes the initial transfer of a defined glycan (Glc(3)Man(9)GlcNAc(2) in eukaryotes) from the lipid carrier dolichol-pyrophosphate to an asparagine residue within an Asn-X-Ser/Thr consensus motif in nascent polypeptide chains, the first step in protein N-glycosylation. N-glycosylation occurs cotranslationally and the complex associates with the Sec61 complex at the channel-forming translocon complex that mediates protein translocation across the endoplasmic reticulum (ER). All subunits are required for a maximal enzyme activity. This subunit contains the active site and the acceptor peptide and donor lipid-linked oligosaccharide (LLO) binding pockets. The chain is Dolichyl-diphosphooligosaccharide--protein glycosyltransferase subunit STT3B (STT3B) from Arabidopsis thaliana (Mouse-ear cress).